A 498-amino-acid chain; its full sequence is Cytotardin (498 aa).

A coil 1A region spans residues 18-58 (DRVHSKDELQALNTRLAKYIDKIRNLENENVALQRQLQTAE). In terms of domain architecture, IF rod spans 22–378 (SKDELQALNT…KLLSGEEQRL (357 aa)). The segment at 59-69 (QTTVTEIHRVS) is linker 1. Positions 70-213 (KNYDEELAKL…ENLREEKSQR (144 aa)) are coil 1B. Residues 214-231 (QYLLHDLQRGLQDEFESK) are linker 2. The tract at residues 232-371 (LVQQLNELRA…AELATYNKLL (140 aa)) is coil 2. The disordered stretch occupies residues 381 to 425 (DGSGTVIRRPTGGATGTGSGIYGGTGSGGYSRDIGSTTTTKTTYT). Residues 393–409 (GATGTGSGIYGGTGSGG) are compositionally biased toward gly residues.

It belongs to the intermediate filament family.

The protein resides in the cytoplasm. Its subcellular location is the cell cortex. Intermediate filament (IF) protein that forms both short filaments and extensive cytoskeletal networks which most likely are homomeric. Some of the cytotardin arrays display cage-like perinuclear structures, while others are located in the periphery close to the cell membrane. The entire tardigrade body is ensheathed by a grid of belt-like filaments formed by the cytotardin protein, which retain their integrity even in contracted specimens. The belt-like structures encircling each epidermal cell might help to resist the shearing forces that arise during freezing and thawing cycles, whereas the dense meshwork at the basis of each claw and around the stylets might provide the tissue stability necessary for locomotion and feeding. This is Cytotardin from Hypsibius exemplaris (Freshwater tardigrade).